A 230-amino-acid chain; its full sequence is UPF0173 metal-dependent hydrolase MM_2300 (230 aa).

The protein belongs to the UPF0173 family.

The chain is UPF0173 metal-dependent hydrolase MM_2300 from Methanosarcina mazei (strain ATCC BAA-159 / DSM 3647 / Goe1 / Go1 / JCM 11833 / OCM 88) (Methanosarcina frisia).